The sequence spans 436 residues: MAITKVHARQIFDSRGNPTVEVEVTTDKGLFRAAVPSGASTGVHEALELRDGIKADYVGKGVLKAVENVNKTIAPALVAANLDVKNQKAVDDFLLKLDGTPNKSKLGANAILGVSLAVARAGAADKGVPLYQHLGELAGNKGPWILPVPSMNVLNGGSHAGNKLAMQEFMILPTGAKSFTEALKMGSEVYHALKSVIKAKYGQDACNVGDEGGFAPNIQDNKEGLELLNEAIAKAGYTGKVKIGMDVASSEFYKDGKYDLDFKNPNSDPSKWISGEELGQFYKEITSEYPIVSIEDPYDQDDFESWSKFRADMQDKIQIVGDDLTVTNPKRIAMAIEKKACNGLLLKVNQIGTVSESIQAALDAFNDGWGVMVSHRSGETEDTFIADLVVGLKSGQIKTGAPCRSERLAKYNQLLRIEEELGANATYAGENFRRPF.

The substrate site is built by H159 and E168. The Proton donor role is filled by E211. D246, E295, and D322 together coordinate Mg(2+). Substrate contacts are provided by E295 and D322. K347 (proton acceptor) is an active-site residue. Residues 374–377 (SHRS) and K398 contribute to the substrate site.

Belongs to the enolase family. As to quaternary structure, homodimer. Mg(2+) is required as a cofactor.

The protein resides in the cytoplasm. It carries out the reaction (2R)-2-phosphoglycerate = phosphoenolpyruvate + H2O. It participates in carbohydrate degradation; glycolysis; pyruvate from D-glyceraldehyde 3-phosphate: step 4/5. In Neocallimastix frontalis (Rumen fungus), this protein is Enolase.